Here is a 410-residue protein sequence, read N- to C-terminus: Cysteine desulfurase IscS (410 aa).

Residues Ala80–Thr81, Asn160, Gln188, and Ser208–His210 contribute to the pyridoxal 5'-phosphate site. N6-(pyridoxal phosphate)lysine is present on Lys211. A pyridoxal 5'-phosphate-binding site is contributed by Thr248. Catalysis depends on Cys334, which acts as the Cysteine persulfide intermediate. Cys334 lines the [2Fe-2S] cluster pocket.

Belongs to the class-V pyridoxal-phosphate-dependent aminotransferase family. NifS/IscS subfamily. Homodimer. Forms a heterotetramer with IscU, interacts with other sulfur acceptors. The cofactor is pyridoxal 5'-phosphate.

The protein resides in the cytoplasm. The enzyme catalyses (sulfur carrier)-H + L-cysteine = (sulfur carrier)-SH + L-alanine. The protein operates within cofactor biosynthesis; iron-sulfur cluster biosynthesis. Its function is as follows. Master enzyme that delivers sulfur to a number of partners involved in Fe-S cluster assembly, tRNA modification or cofactor biosynthesis. Catalyzes the removal of elemental sulfur atoms from cysteine to produce alanine. Functions as a sulfur delivery protein for Fe-S cluster synthesis onto IscU, an Fe-S scaffold assembly protein, as well as other S acceptor proteins. The polypeptide is Cysteine desulfurase IscS (Rickettsia africae (strain ESF-5)).